Consider the following 276-residue polypeptide: Halorhodopsin (276 aa).

A propeptide spanning residues 1–20 (MTAASTTATTVLQATQSDVL) is cleaved from the precursor. Position 21 is a pyrrolidone carboxylic acid (Gln-21). Transmembrane regions (helical) follow at residues 31-51 (SSIW…VAMG), 61-81 (LIWV…AGLA), 109-129 (YLTW…LADT), 134-154 (LFTA…AALI), 162-182 (WVFY…LLVQ), 195-215 (IFGT…ILWA), and 220-240 (GVAL…DILA). Lys-241 is modified (N6-(retinylidene)lysine).

This sequence belongs to the archaeal/bacterial/fungal opsin family. In terms of processing, the covalent binding of retinal to the apoprotein, bacterioopsin, generates bacteriorhodopsin.

Its subcellular location is the membrane. In terms of biological role, light-driven chloride pump. The protein is Halorhodopsin (hop) of Haloarcula marismortui (strain ATCC 43049 / DSM 3752 / JCM 8966 / VKM B-1809) (Halobacterium marismortui).